A 92-amino-acid polypeptide reads, in one-letter code: Small ribosomal subunit protein uS19 (92 aa).

The disordered stretch occupies residues 72–92; it reads GEFSPTRSFRGHAGAKNKGKK. Positions 80–92 are enriched in basic residues; it reads FRGHAGAKNKGKK.

It belongs to the universal ribosomal protein uS19 family.

Functionally, protein S19 forms a complex with S13 that binds strongly to the 16S ribosomal RNA. The sequence is that of Small ribosomal subunit protein uS19 from Flavobacterium johnsoniae (strain ATCC 17061 / DSM 2064 / JCM 8514 / BCRC 14874 / CCUG 350202 / NBRC 14942 / NCIMB 11054 / UW101) (Cytophaga johnsonae).